We begin with the raw amino-acid sequence, 61 residues long: UPF0391 membrane protein Bpro_0066 (61 aa).

2 helical membrane-spanning segments follow: residues 5–25 (AIIF…GVAA) and 33–53 (ILFG…ALGV).

Belongs to the UPF0391 family.

It localises to the cell membrane. In Polaromonas sp. (strain JS666 / ATCC BAA-500), this protein is UPF0391 membrane protein Bpro_0066.